Here is a 328-residue protein sequence, read N- to C-terminus: Probable E3 ubiquitin-protein ligase RHC1A (328 aa).

N-acetylserine is present on S2. The RING-type; atypical zinc-finger motif lies at 190 to 231; it reads CPVCKDEFELGSEAKQMPCNHIYHSDCIVPWLVQHNSCPVCR. Residues 233-324 are disordered; it reads ELPSASGPSS…QQSYMGYSGW (92 aa). Polar residues predominate over residues 238 to 250; the sequence is SGPSSSQNRTTPT. Low complexity-rich tracts occupy residues 251-266 and 275-290; these read RNYRSSSSSSSSNSRE and FSSFWPFRSSGSSSSS. Polar residues predominate over residues 291-300; it reads TQNRGGTRNS.

It catalyses the reaction S-ubiquitinyl-[E2 ubiquitin-conjugating enzyme]-L-cysteine + [acceptor protein]-L-lysine = [E2 ubiquitin-conjugating enzyme]-L-cysteine + N(6)-ubiquitinyl-[acceptor protein]-L-lysine.. It participates in protein modification; protein ubiquitination. In terms of biological role, probable E3 ubiquitin-protein ligase that may possess E3 ubiquitin ligase activity in vitro. This is Probable E3 ubiquitin-protein ligase RHC1A from Arabidopsis thaliana (Mouse-ear cress).